Here is a 236-residue protein sequence, read N- to C-terminus: Large ribosomal subunit protein uL1 (236 aa).

Belongs to the universal ribosomal protein uL1 family. In terms of assembly, part of the 50S ribosomal subunit.

In terms of biological role, binds directly to 23S rRNA. The L1 stalk is quite mobile in the ribosome, and is involved in E site tRNA release. Functionally, protein L1 is also a translational repressor protein, it controls the translation of the L11 operon by binding to its mRNA. This Kocuria rhizophila (strain ATCC 9341 / DSM 348 / NBRC 103217 / DC2201) protein is Large ribosomal subunit protein uL1.